A 222-amino-acid polypeptide reads, in one-letter code: N-(5'-phosphoribosyl)anthranilate isomerase (222 aa).

It belongs to the TrpF family.

The enzyme catalyses N-(5-phospho-beta-D-ribosyl)anthranilate = 1-(2-carboxyphenylamino)-1-deoxy-D-ribulose 5-phosphate. The protein operates within amino-acid biosynthesis; L-tryptophan biosynthesis; L-tryptophan from chorismate: step 3/5. In Rhizobium etli (strain ATCC 51251 / DSM 11541 / JCM 21823 / NBRC 15573 / CFN 42), this protein is N-(5'-phosphoribosyl)anthranilate isomerase.